The chain runs to 291 residues: Protease HtpX homolog (291 aa).

Helical transmembrane passes span 4-24 (VFLF…SARL) and 38-58 (LGML…ISLL). Zn(2+) is bound at residue His-144. The active site involves Glu-145. His-148 provides a ligand contact to Zn(2+). Transmembrane regions (helical) follow at residues 159-179 (LIQG…AYAL) and 199-219 (ISSI…VMYF). Zn(2+) is bound at residue Glu-224.

Belongs to the peptidase M48B family. The cofactor is Zn(2+).

It localises to the cell inner membrane. The protein is Protease HtpX homolog of Chlorobium luteolum (strain DSM 273 / BCRC 81028 / 2530) (Pelodictyon luteolum).